Reading from the N-terminus, the 392-residue chain is Bone morphogenetic protein 15 (392 aa).

The N-terminal stretch at 1 to 25 (MALLTILRILLWGVVLFMEQRVQMA) is a signal peptide. The propeptide occupies 26-267 (KPGWPSTALL…ESSFLMRSVR (242 aa)). 5 N-linked (GlcNAc...) asparagine glycosylation sites follow: asparagine 85, asparagine 213, asparagine 236, asparagine 349, and asparagine 373. Cystine bridges form between cysteine 291/cysteine 357, cysteine 320/cysteine 389, and cysteine 324/cysteine 391.

Belongs to the TGF-beta family. Homodimer. But, in contrast to other members of this family, cannot be disulfide-linked. In terms of tissue distribution, ovary specific.

The protein localises to the secreted. Its function is as follows. May be involved in follicular development. Oocyte-specific growth/differentiation factor that stimulates folliculogenesis and granulosa cell (GC) growth. The polypeptide is Bone morphogenetic protein 15 (Bmp15) (Mus musculus (Mouse)).